We begin with the raw amino-acid sequence, 247 residues long: 4-nitrobenzoate reductase (247 aa).

29–33 (RRSVR) contacts FMN. NADP(+) contacts are provided by serine 59, arginine 112, tyrosine 120, and leucine 126. Arginine 232 serves as a coordination point for FMN.

Belongs to the nitroreductase family. Requires FMN as cofactor.

It catalyses the reaction 4-nitrobenzoate + 2 NADPH + 2 H(+) = 4-hydroxylaminobenzoate + 2 NADP(+) + H2O. Functionally, nitroreductase involved in the degradation of nitroaromatic compounds. Catalyzes the conversion of 4-nitrobenzoate to 4-hydroxylaminobenzoate. The polypeptide is 4-nitrobenzoate reductase (Nocardioides sp. (strain LMS-CY)).